A 509-amino-acid chain; its full sequence is tRNA-2-methylthio-N(6)-dimethylallyladenosine synthase (509 aa).

Positions 1–15 (MNEQQRLASQQVNSS) are enriched in polar residues. Residues 1-26 (MNEQQRLASQQVNSSTKKEEKDYSKY) are disordered. A compositionally biased stretch (basic and acidic residues) spans 16–25 (TKKEEKDYSK). Residues 66–184 (RKFYIRTYGC…LPYILKDAMF (119 aa)) form the MTTase N-terminal domain. [4Fe-4S] cluster contacts are provided by Cys75, Cys111, Cys145, Cys221, Cys225, and Cys228. A Radical SAM core domain is found at 207-437 (RRGDIKAWVN…NALVNKLAIE (231 aa)). Residues 440–503 (DRYKGQIVEV…TWSLNGELVE (64 aa)) form the TRAM domain.

The protein belongs to the methylthiotransferase family. MiaB subfamily. In terms of assembly, monomer. It depends on [4Fe-4S] cluster as a cofactor.

The protein resides in the cytoplasm. The enzyme catalyses N(6)-dimethylallyladenosine(37) in tRNA + (sulfur carrier)-SH + AH2 + 2 S-adenosyl-L-methionine = 2-methylsulfanyl-N(6)-dimethylallyladenosine(37) in tRNA + (sulfur carrier)-H + 5'-deoxyadenosine + L-methionine + A + S-adenosyl-L-homocysteine + 2 H(+). Its function is as follows. Catalyzes the methylthiolation of N6-(dimethylallyl)adenosine (i(6)A), leading to the formation of 2-methylthio-N6-(dimethylallyl)adenosine (ms(2)i(6)A) at position 37 in tRNAs that read codons beginning with uridine. The polypeptide is tRNA-2-methylthio-N(6)-dimethylallyladenosine synthase (Bacillus thuringiensis (strain Al Hakam)).